Consider the following 197-residue polypeptide: Small ribosomal subunit protein uS4c (197 aa).

The S4 RNA-binding domain maps to 92-153 (MRLDAVVYRL…APIVEHAKTF (62 aa)).

The protein belongs to the universal ribosomal protein uS4 family. Part of the 30S ribosomal subunit. Contacts protein S5. The interaction surface between S4 and S5 is involved in control of translational fidelity.

Its subcellular location is the plastid. It localises to the chloroplast. Its function is as follows. One of the primary rRNA binding proteins, it binds directly to 16S rRNA where it nucleates assembly of the body of the 30S subunit. With S5 and S12 plays an important role in translational accuracy. The polypeptide is Small ribosomal subunit protein uS4c (rps4) (Ostreococcus tauri).